The primary structure comprises 206 residues: Large ribosomal subunit protein uL4 (206 aa).

The disordered stretch occupies residues 42 to 94 (RRQQGSHKAQGRGDVSRTGSKMYKQKGTGRARHHSARAPQFRGGGQAHGPVVR). Basic residues predominate over residues 64-77 (YKQKGTGRARHHSA).

It belongs to the universal ribosomal protein uL4 family. Part of the 50S ribosomal subunit.

One of the primary rRNA binding proteins, this protein initially binds near the 5'-end of the 23S rRNA. It is important during the early stages of 50S assembly. It makes multiple contacts with different domains of the 23S rRNA in the assembled 50S subunit and ribosome. Functionally, forms part of the polypeptide exit tunnel. The chain is Large ribosomal subunit protein uL4 from Brucella abortus biovar 1 (strain 9-941).